The primary structure comprises 610 residues: Aspartate--tRNA(Asp/Asn) ligase (610 aa).

Glu182 lines the L-aspartate pocket. The interval 206 to 209 (QLFK) is aspartate. Residue Arg228 participates in L-aspartate binding. ATP contacts are provided by residues 228–230 (RDE) and Gln237. His470 is an L-aspartate binding site. Glu506 contacts ATP. Arg513 contributes to the L-aspartate binding site. 558 to 561 (GLDR) contributes to the ATP binding site.

The protein belongs to the class-II aminoacyl-tRNA synthetase family. Type 1 subfamily. Homodimer.

Its subcellular location is the cytoplasm. It catalyses the reaction tRNA(Asx) + L-aspartate + ATP = L-aspartyl-tRNA(Asx) + AMP + diphosphate. Functionally, aspartyl-tRNA synthetase with relaxed tRNA specificity since it is able to aspartylate not only its cognate tRNA(Asp) but also tRNA(Asn). Reaction proceeds in two steps: L-aspartate is first activated by ATP to form Asp-AMP and then transferred to the acceptor end of tRNA(Asp/Asn). This chain is Aspartate--tRNA(Asp/Asn) ligase, found in Acidobacterium capsulatum (strain ATCC 51196 / DSM 11244 / BCRC 80197 / JCM 7670 / NBRC 15755 / NCIMB 13165 / 161).